Here is a 926-residue protein sequence, read N- to C-terminus: LPS-assembly protein LptD (926 aa).

The signal sequence occupies residues 1 to 22 (MALKSPAFRKKFPLLVTGSLLA). Residues 55 to 91 (AAAVDLPPRPVHDTTSVSSNGTVTSQGTSSGEQSAGT) are disordered. Positions 68–91 (TTSVSSNGTVTSQGTSSGEQSAGT) are enriched in low complexity.

It belongs to the LptD family. Component of the lipopolysaccharide transport and assembly complex. Interacts with LptE and LptA.

The protein resides in the cell outer membrane. Functionally, together with LptE, is involved in the assembly of lipopolysaccharide (LPS) at the surface of the outer membrane. In Pseudomonas syringae pv. syringae (strain B728a), this protein is LPS-assembly protein LptD.